We begin with the raw amino-acid sequence, 1225 residues long: DNA-directed RNA polymerase subunit beta' (1225 aa).

Zn(2+)-binding residues include Cys-60, Cys-62, Cys-75, and Cys-78. 3 residues coordinate Mg(2+): Asp-450, Asp-452, and Asp-454. Cys-818, Cys-892, Cys-899, and Cys-902 together coordinate Zn(2+).

The protein belongs to the RNA polymerase beta' chain family. As to quaternary structure, the RNAP catalytic core consists of 2 alpha, 1 beta, 1 beta' and 1 omega subunit. When a sigma factor is associated with the core the holoenzyme is formed, which can initiate transcription. The cofactor is Mg(2+). Zn(2+) serves as cofactor.

It carries out the reaction RNA(n) + a ribonucleoside 5'-triphosphate = RNA(n+1) + diphosphate. Its function is as follows. DNA-dependent RNA polymerase catalyzes the transcription of DNA into RNA using the four ribonucleoside triphosphates as substrates. In Streptococcus pneumoniae (strain P1031), this protein is DNA-directed RNA polymerase subunit beta'.